The following is an 83-amino-acid chain: Hainantoxin-III 8 (83 aa).

A signal peptide spans 1–21 (MKASMFLALAGLVLLFVVGYA). The propeptide occupies 22–48 (SESEEKEFPRELLSKIFAVDDFTGEER). 3 disulfides stabilise this stretch: cysteine 50/cysteine 65, cysteine 57/cysteine 70, and cysteine 64/cysteine 77. Position 81 is a leucine amide (leucine 81).

It belongs to the neurotoxin 10 (Hwtx-1) family. 15 (Hntx-3) subfamily. As to quaternary structure, monomer. As to expression, expressed by the venom gland.

Its subcellular location is the secreted. Functionally, selective antagonist of neuronal tetrodotoxin (TTX)-sensitive voltage-gated sodium channels (IC(50)=1270 nM on Nav1.1/SCN1A, 270 nM on Nav1.2/SCN2A, 491 nM on Nav1.3/SCN3A and 232 nM on Nav1.7/SCN9A). This toxin suppress Nav1.7 current amplitude without significantly altering the activation, inactivation, and repriming kinetics. Short extreme depolarizations partially activate the toxin-bound channel, indicating voltage-dependent inhibition of this toxin. This toxin increases the deactivation of the Nav1.7 current after extreme depolarizations. The toxin-Nav1.7 complex is gradually dissociated upon prolonged strong depolarizations in a voltage-dependent manner, and the unbound toxin rebinds to Nav1.7 after a long repolarization. Moreover, analysis of chimeric channels showed that the DIIS3-S4 linker is critical for toxin binding to Nav1.7. These data are consistent with this toxin interacting with Nav1.7 site 4 and trapping the domain II voltage sensor in the closed state. This Cyriopagopus hainanus (Chinese bird spider) protein is Hainantoxin-III 8.